The chain runs to 286 residues: CDP-diacylglycerol--serine O-phosphatidyltransferase (286 aa).

The next 6 membrane-spanning stretches (helical) occupy residues 15–35, 74–94, 95–115, 135–155, 167–187, and 207–227; these read ILPS…IKFA, IDSL…LYVS, MLSK…CVVL, EFFV…LLAL, GWFL…GIPM, and LAIC…VIII.

This sequence belongs to the CDP-alcohol phosphatidyltransferase class-I family.

It localises to the cell membrane. It carries out the reaction a CDP-1,2-diacyl-sn-glycerol + L-serine = a 1,2-diacyl-sn-glycero-3-phospho-L-serine + CMP + H(+). The chain is CDP-diacylglycerol--serine O-phosphatidyltransferase (pssA) from Mycobacterium tuberculosis (strain ATCC 25618 / H37Rv).